Reading from the N-terminus, the 403-residue chain is Aloesone synthase (403 aa).

The active site involves cysteine 174. CoA-binding positions include serine 281 and 318-321 (GGRA).

The protein belongs to the thiolase-like superfamily. Chalcone/stilbene synthases family. As to quaternary structure, homodimer.

The protein operates within secondary metabolite biosynthesis; flavonoid biosynthesis. Functionally, catalyzes the iterative condensations of 6, 7 or 8 molecules of malonyl-CoA to produce various aromatic polyketides. Produces the heptaketide aloesone, the aglycone of aloesin, from 7 molecules of malonyl-CoA as a major product. Also able to produce a hexaketide pyrone, a heptaketide 6-(2-acetyl-3,5-dihydroxybenzyl)-4-hydroxy-2-pyrone, a novel heptaketide 6-(2-(2,4-dihydroxy-6-methylphenyl)-2-oxoethyl)-4-hydroxy-2-pyrone and octaketides SEK4/SEK4b. The polypeptide is Aloesone synthase (PKS3) (Aloe arborescens (Kidachi aloe)).